Reading from the N-terminus, the 2594-residue chain is Protein sevenless (2594 aa).

2 disordered regions span residues 1–34 (MFWR…PKRL) and 49–92 (KMST…RVRR). Over 1–2141 (MFWREDAAQQ…FVSPEKRGSL (2141 aa)) the chain is Extracellular. The segment covering 9 to 26 (QQQQQQQQQQQQQQQQQQ) has biased composition (low complexity). 10 N-linked (GlcNAc...) asparagine glycosylation sites follow: N77, N401, N508, N532, N641, N667, N778, N797, N874, and N980. Fibronectin type-III domains lie at 358–462 (ETTQ…TPME) and 468–560 (APII…SPLE). The Fibronectin type-III 3 domain maps to 838-938 (PPAPRELRAL…APLATRTWPL (101 aa)). Residues 1024–1066 (GLLYWTDLARDCVQRLDPFSGERELLPIFGARHLALDSAQGHL) form an LDL-receptor class B repeat. Fibronectin type-III domains lie at 1227–1317 (LAVP…QLDT) and 1324–1430 (QPRR…VQSV). N-linked (GlcNAc...) asparagine glycans are attached at residues N1257, N1344, N1382, N1577, N1587, N1665, N1752, N1776, N1824, N1908, N1966, and N2088. Fibronectin type-III domains lie at 1711–1814 (TAAA…TLHT), 1821–1920 (APRN…SYAP), 1922–2010 (PPLQ…TLGD), and 2014–2132 (APGR…AEPF). A helical membrane pass occupies residues 2142–2162 (VLAIIAPAAIVSSCVLALVLV). The Cytoplasmic segment spans residues 2163-2594 (RKLQKRRHRA…LYANEGISGL (432 aa)). The Protein kinase domain maps to 2224-2495 (LTLLRFLGSG…KRCLSTLQAL (272 aa)). ATP is bound by residues 2230–2238 (LGSGAFGEV) and K2257. D2355 acts as the Proton acceptor in catalysis. Y2391 is subject to Phosphotyrosine; by autocatalysis. A disordered region spans residues 2543 to 2568 (TVSTTDADTTGSPTTPTAPTTPTTTT). The span at 2545-2568 (STTDADTTGSPTTPTAPTTPTTTT) shows a compositional bias: low complexity.

Belongs to the protein kinase superfamily. Tyr protein kinase family. Insulin receptor subfamily.

Its subcellular location is the cell membrane. It carries out the reaction L-tyrosyl-[protein] + ATP = O-phospho-L-tyrosyl-[protein] + ADP + H(+). Its function is as follows. Receptor for an extracellular signal required to instruct a cell to differentiate into a R7 photoreceptor. The ligand for Sev is the Boss (Bride of Sevenless) protein. This chain is Protein sevenless (sev), found in Drosophila virilis (Fruit fly).